A 363-amino-acid chain; its full sequence is Isopentenyl-diphosphate delta-isomerase (363 aa).

Residue 15-16 coordinates substrate; sequence RK. FMN contacts are provided by residues serine 73, 74–76, serine 104, and asparagine 133; that span reads SMT. 104-106 is a substrate binding site; that stretch reads SMR. Glutamine 168 is a binding site for substrate. A Mg(2+)-binding site is contributed by glutamate 169. Residues lysine 200, threonine 230, and 313-314 contribute to the FMN site; that span reads AG.

The protein belongs to the IPP isomerase type 2 family. In terms of assembly, homooctamer. Dimer of tetramers. It depends on FMN as a cofactor. NADPH serves as cofactor. Requires Mg(2+) as cofactor.

The protein resides in the cytoplasm. It carries out the reaction isopentenyl diphosphate = dimethylallyl diphosphate. In terms of biological role, involved in the biosynthesis of isoprenoids. Catalyzes the 1,3-allylic rearrangement of the homoallylic substrate isopentenyl (IPP) to its allylic isomer, dimethylallyl diphosphate (DMAPP). In Chlorobium phaeobacteroides (strain DSM 266 / SMG 266 / 2430), this protein is Isopentenyl-diphosphate delta-isomerase.